Consider the following 441-residue polypeptide: N-succinylarginine dihydrolase (441 aa).

Residues 19 to 28 (AGLSFGNEAS), Asn-110, and 137 to 138 (HR) each bind substrate. The active site involves Glu-174. Arg-212 lines the substrate pocket. Residue His-248 is part of the active site. Asp-250 and Asn-359 together coordinate substrate. The active-site Nucleophile is the Cys-365.

Belongs to the succinylarginine dihydrolase family. Homodimer.

The catalysed reaction is N(2)-succinyl-L-arginine + 2 H2O + 2 H(+) = N(2)-succinyl-L-ornithine + 2 NH4(+) + CO2. The protein operates within amino-acid degradation; L-arginine degradation via AST pathway; L-glutamate and succinate from L-arginine: step 2/5. Catalyzes the hydrolysis of N(2)-succinylarginine into N(2)-succinylornithine, ammonia and CO(2). This Erwinia tasmaniensis (strain DSM 17950 / CFBP 7177 / CIP 109463 / NCPPB 4357 / Et1/99) protein is N-succinylarginine dihydrolase.